The sequence spans 538 residues: Pyruvate kinase (538 aa).

Phosphoserine is present on Ser45. Substrate is bound at residue Arg72. K(+) contacts are provided by Asn74, Ser76, Asp107, and Thr108. Residue 74 to 77 coordinates ATP; the sequence is NFSH. Positions 114 and 200 each coordinate ATP. Glu265 serves as a coordination point for Mg(2+). Gly288, Asp289, and Thr321 together coordinate substrate. Residue Asp289 participates in Mg(2+) binding.

It belongs to the pyruvate kinase family. As to quaternary structure, homotetramer. Requires Mg(2+) as cofactor. K(+) is required as a cofactor.

It carries out the reaction pyruvate + ATP = phosphoenolpyruvate + ADP + H(+). Its pathway is carbohydrate degradation; glycolysis; pyruvate from D-glyceraldehyde 3-phosphate: step 5/5. This Hypocrea jecorina (Trichoderma reesei) protein is Pyruvate kinase (pki1).